The chain runs to 326 residues: tRNA uridine(34) hydroxylase (326 aa).

Residues 123–217 form the Rhodanese domain; that stretch reads SDPDVLLVDT…YLEEVPEENS (95 aa). The active-site Cysteine persulfide intermediate is C177. Over residues 276–320 the composition is skewed to basic and acidic residues; the sequence is EEQKSRFREREKQVQLANERGETHVGGDAAKLIEQRKQEKKEKKQ. The disordered stretch occupies residues 276–326; that stretch reads EEQKSRFREREKQVQLANERGETHVGGDAAKLIEQRKQEKKEKKQQQRSSK.

Belongs to the TrhO family.

It catalyses the reaction uridine(34) in tRNA + AH2 + O2 = 5-hydroxyuridine(34) in tRNA + A + H2O. Functionally, catalyzes oxygen-dependent 5-hydroxyuridine (ho5U) modification at position 34 in tRNAs. The protein is tRNA uridine(34) hydroxylase of Aliivibrio salmonicida (strain LFI1238) (Vibrio salmonicida (strain LFI1238)).